A 790-amino-acid chain; its full sequence is SH3 domain-containing protein 19 (790 aa).

Disordered regions lie at residues 21–196 (EGQT…PVLQ) and 241–374 (EPIK…MDLQ). A Phosphoserine modification is found at Ser65. Residues 287-296 (NTFSTVSGKL) are compositionally biased toward polar residues. A compositionally biased stretch (pro residues) spans 336 to 351 (QQPPTKVPPERPPPPK). The interaction with SH3GL1 stretch occupies residues 342 to 358 (VPPERPPPPKLSATRRS). Residues 365–374 (NRSSSDMDLQ) are compositionally biased toward polar residues. Position 369 is a phosphoserine (Ser369). SH3 domains are found at residues 415 to 477 (LSVP…PLDE), 495 to 554 (SGAP…VIID), 571 to 630 (VKGS…PVED), 661 to 720 (LPAE…PCPA), and 730 to 789 (PKGR…FLQI). Ser762 carries the phosphoserine modification.

In terms of assembly, interacts with ADAM12. Isoform 4 and isoform 5 (but not isoform 1 and isoform 2) interact with ADAM9, ADAM10, ADAM15 and ADAM17. Interacts with SH3GL1 SH3 domain. Interacts via SH3 3 and SH3 4 or SH3 4 and SH3 5 domains with SOS2. Probably forms a trimeric complex with SH3GL1 and SOS2. Interacts with SH3YL1. In terms of tissue distribution, widely expressed with highest levels in heart, skeletal muscle, kidney, liver, placenta, small intestine and lung. Expressed at low levels in colon, thymus, spleen and leukocytes.

It localises to the cytoplasm. The protein resides in the nucleus. Functionally, may play a role in regulating A disintegrin and metalloproteases (ADAMs) in the signaling of EGFR-ligand shedding. May be involved in suppression of Ras-induced cellular transformation and Ras-mediated activation of ELK1. Plays a role in the regulation of cell morphology and cytoskeletal organization. This Homo sapiens (Human) protein is SH3 domain-containing protein 19 (SH3D19).